A 3336-amino-acid polypeptide reads, in one-letter code: Pericentrin (3336 aa).

Disordered regions lie at residues 1-71 (MEVE…DICK) and 81-100 (GAGG…KRED). A compositionally biased stretch (basic and acidic residues) spans 27–37 (TKGDSSHSEKK). Residue Ser-44 is modified to Phosphoserine. A Phosphoserine modification is found at Ser-188. The residue at position 191 (Thr-191) is a Phosphothreonine. Positions 258–553 (HTAQLELTQA…RLQGAREDAL (296 aa)) form a coiled coil. A disordered region spans residues 569–589 (KPEKGRKDHVDELEPERHKES). Phosphoserine occurs at positions 610 and 682. Coiled-coil stretches lie at residues 675–835 (TEHK…DALH) and 1010–1146 (TILT…MLKA). Ser-1245 is subject to Phosphoserine. Residues 1299–1949 (NEETAQVVRK…FLRCQVELDR (651 aa)) are a coiled coil. A disordered region spans residues 1619 to 1638 (TLDAGRCPEPPSGSPPEGPE). Pro residues predominate over residues 1626–1636 (PEPPSGSPPEG). Phosphoserine occurs at positions 1653 and 1712. A disordered region spans residues 1954-1974 (RATAHTRVPGAHPQPRMDGGA). Ser-2044 is subject to Phosphoserine. Positions 2064–2082 (VDLVAQVKQLQEKLNRLLY) form a coiled coil. The interval 2168–2214 (SLIPDEMPDSPIQEKSECQDMSLSSPTSVLGGSRHQSHTAEAGPRKS) is disordered. 5 positions are modified to phosphoserine: Ser-2177, Ser-2192, Ser-2225, Ser-2226, and Ser-2327. The span at 2186 to 2197 (QDMSLSSPTSVL) shows a compositional bias: polar residues. Positions 2318 to 2374 (SFDSQETLSSPPPGLEGKADRSEKSDGSGFGARLSPGSGGPEAQTAGPVTPASISGR) are disordered. The span at 2334–2343 (GKADRSEKSD) shows a compositional bias: basic and acidic residues. Phosphoserine is present on residues Ser-2352, Ser-2355, Ser-2477, and Ser-2486. Residues 2536–3086 (QEKLQHLRTA…EKLLKHHLQK (551 aa)) are a coiled coil. Disordered regions lie at residues 2875–2910 (LEQS…WRKW) and 3084–3126 (LQKG…EEAH). Basic and acidic residues-rich tracts occupy residues 2876–2896 (EQSH…RSAE) and 3092–3102 (RSERSAWKPDE). Residues 2983–3246 (LSAARLLTSF…ARQPQSPPRT (264 aa)) are interaction with NEK2. A calmodulin-binding region spans residues 3195 to 3208 (RFRTAVRVVIAILR). The interval 3224–3300 (ALAQGKAPRP…RSLTASQDPE (77 aa)) is disordered. Positions 3226–3240 (AQGKAPRPGPRARQP) are enriched in low complexity. The segment covering 3283–3297 (PSPNSRLERSLTASQ) has biased composition (polar residues). Ser-3302 bears the Phosphoserine mark.

In terms of assembly, interacts with CHD3. Interacts with CHD4; the interaction regulates centrosome integrity. Interacts with DISC1 and PCM1. Binds calmodulin. Interacts with CDK5RAP2; the interaction is leading to centrosomal localization of PCNT and CDK5RAP2. Interacts with isoform 1 of NEK2. Interacts with CEP131. Interacts with CCDC13. Interacts with CEP68. Interacts with ATF5; the ATF5:PCNT:polyglutamylated tubulin (PGT) tripartite unites the mother centriole and the pericentriolar material (PCM) in the centrosome. In terms of processing, cleaved during mitotis which leads to removal of CDK5RAP2 from the centrosome and promotes centriole disengagement and subsequent centriole separation. The C-terminal fragment is rapidly degraded following cleavage. Post-translationally, ubiquitinated by TRIM43; leading to proteasomal degradation. As to expression, expressed in all tissues tested, including placenta, liver, kidney and thymus.

Its subcellular location is the cytoplasm. It is found in the cytoskeleton. It localises to the microtubule organizing center. The protein resides in the centrosome. In terms of biological role, integral component of the filamentous matrix of the centrosome involved in the initial establishment of organized microtubule arrays in both mitosis and meiosis. Plays a role, together with DISC1, in the microtubule network formation. Is an integral component of the pericentriolar material (PCM). May play an important role in preventing premature centrosome splitting during interphase by inhibiting NEK2 kinase activity at the centrosome. The chain is Pericentrin (PCNT) from Homo sapiens (Human).